A 1077-amino-acid polypeptide reads, in one-letter code: Tudor domain-containing protein 7 (1077 aa).

2 consecutive HTH OST-type domains span residues methionine 1–valine 67 and aspartate 220–threonine 289. Over residues valine 300–asparagine 328 the composition is skewed to polar residues. A disordered region spans residues valine 300–lysine 331. The HTH OST-type 3 domain maps to proline 330–serine 398. 2 Tudor domains span residues phenylalanine 494–leucine 551 and leucine 684–aspartate 741. The segment at serine 841 to proline 883 is disordered. The span at cysteine 857–aspartate 868 shows a compositional bias: basic and acidic residues.

It belongs to the TDRD7 family.

It localises to the cytoplasm. Component of specific cytoplasmic RNA granules involved in post-transcriptional regulation of specific genes: probably acts by binding to specific mRNAs and regulating their translation. Probably required during spermatogenesis. The chain is Tudor domain-containing protein 7 (tdrd7) from Xenopus tropicalis (Western clawed frog).